The chain runs to 235 residues: Secretory carrier-associated membrane protein 5B (235 aa).

Over 1-39 (MSDKPNNFPPLPRFIPLKPCFYQDFDTDIPDVHRTTAKR) the chain is Cytoplasmic. A helical transmembrane segment spans residues 40-60 (LYYLWMLNSITLGVNLIGCLA). At 61-67 (WLIGGGG) the chain is on the extracellular side. A helical membrane pass occupies residues 68–88 (ATNFGLAFLWLILFTPCSYVC). The Cytoplasmic portion of the chain corresponds to 89–102 (WFRPIYKAFKTDSS). A helical transmembrane segment spans residues 103–125 (FNFMAFFFTFTGQLVISIIQAVG). Residues 126–148 (IPGWGVCGWIASISFFGTNVGSA) are Extracellular-facing. A helical transmembrane segment spans residues 149 to 169 (VVMLIPTIMFTAVAVLSFVAL). Residues 170–235 (TKVHRFYRGA…TPNYGYSNQM (66 aa)) lie on the Cytoplasmic side of the membrane.

It belongs to the SCAMP family. SCAMP5 subfamily.

The protein resides in the cell membrane. Its subcellular location is the golgi apparatus membrane. The protein localises to the golgi apparatus. It localises to the trans-Golgi network membrane. It is found in the recycling endosome membrane. The protein resides in the cytoplasmic vesicle. Its subcellular location is the secretory vesicle. The protein localises to the synaptic vesicle membrane. Functionally, required for the calcium-dependent exocytosis of signal sequence-containing cytokines. Probably acts in cooperation with the SNARE machinery. This is Secretory carrier-associated membrane protein 5B (scamp5-b) from Xenopus laevis (African clawed frog).